Reading from the N-terminus, the 418-residue chain is MLHPRARTMLLLSLPAVAIGIASSLILIVVMKIASVLQTLLWQRLPGTLGIAQDSPFWIIAILTLTGIAVGLVIRFSQGHAGPDPACEPLIGAPVPPSALPGLIVALILGLAGGVSLGPEHPIMTVNIALAVAIGARLLPRVNRMEWTILASAGTIGALFGTPVAAALIFSQTLNGSSEVPLWDRLFAPLMAAAAGALTTGLFFHPHFSLPIAHYGQMEMTDILSGAIVAAIAIAAGMVAVWCLPRLHAMMHQIKNPVLMLGVGGFILGILGVIAGPVSLFKGLDEMQQMVANQAFSTSDYFLLAVIKLAALVVAAASGFRGGRIFPAVFVGVALGLMLHEHVPAVPAAITVSCAILGIVLVVTRDGWLSLFMAAAVVPNTTLLPLLCIVMLPAWLLLAGKPIMMVNRPKQQPPHDNV.

The next 12 helical transmembrane spans lie at 10-30, 54-74, 99-119, 120-140, 149-169, 186-206, 223-243, 258-278, 300-320, 322-342, 343-363, and 386-406; these read LLLS…LIVV, DSPF…GLVI, ALPG…SLGP, EHPI…RLLP, ILAS…AALI, LFAP…FFHP, ILSG…AVWC, VLML…AGPV, DYFL…ASGF, GGRI…LHEH, VPAV…VLVV, and LLCI…IMMV.

The protein belongs to the chloride channel (TC 2.A.49) family.

It localises to the cell membrane. This is Putative ion-transport protein YfeO from Escherichia fergusonii (strain ATCC 35469 / DSM 13698 / CCUG 18766 / IAM 14443 / JCM 21226 / LMG 7866 / NBRC 102419 / NCTC 12128 / CDC 0568-73).